The chain runs to 404 residues: Phosphopentomutase (404 aa).

The Mn(2+) site is built by Asp-10, Asp-297, His-302, Asp-338, His-339, and His-350.

It belongs to the phosphopentomutase family. Mn(2+) serves as cofactor.

It localises to the cytoplasm. The enzyme catalyses 2-deoxy-alpha-D-ribose 1-phosphate = 2-deoxy-D-ribose 5-phosphate. It catalyses the reaction alpha-D-ribose 1-phosphate = D-ribose 5-phosphate. Its pathway is carbohydrate degradation; 2-deoxy-D-ribose 1-phosphate degradation; D-glyceraldehyde 3-phosphate and acetaldehyde from 2-deoxy-alpha-D-ribose 1-phosphate: step 1/2. Isomerase that catalyzes the conversion of deoxy-ribose 1-phosphate (dRib-1-P) and ribose 1-phosphate (Rib-1-P) to deoxy-ribose 5-phosphate (dRib-5-P) and ribose 5-phosphate (Rib-5-P), respectively. This chain is Phosphopentomutase, found in Colwellia psychrerythraea (strain 34H / ATCC BAA-681) (Vibrio psychroerythus).